We begin with the raw amino-acid sequence, 410 residues long: Tryptophan synthase beta chain (410 aa).

Lys104 carries the post-translational modification N6-(pyridoxal phosphate)lysine.

It belongs to the TrpB family. In terms of assembly, tetramer of two alpha and two beta chains. Requires pyridoxal 5'-phosphate as cofactor.

The enzyme catalyses (1S,2R)-1-C-(indol-3-yl)glycerol 3-phosphate + L-serine = D-glyceraldehyde 3-phosphate + L-tryptophan + H2O. It functions in the pathway amino-acid biosynthesis; L-tryptophan biosynthesis; L-tryptophan from chorismate: step 5/5. Its function is as follows. The beta subunit is responsible for the synthesis of L-tryptophan from indole and L-serine. The polypeptide is Tryptophan synthase beta chain (Thermosynechococcus vestitus (strain NIES-2133 / IAM M-273 / BP-1)).